Reading from the N-terminus, the 409-residue chain is Dual-specificity RNA methyltransferase RlmN (409 aa).

The active-site Proton acceptor is the E121. One can recognise a Radical SAM core domain in the interval 127 to 376 (EEGRGTLCIS…IRTPRGRDIL (250 aa)). A disulfide bridge links C134 with C379. [4Fe-4S] cluster is bound by residues C141, C145, and C148. S-adenosyl-L-methionine is bound by residues 205–206 (GE), S237, 259–261 (SLH), and N336. C379 serves as the catalytic S-methylcysteine intermediate.

It belongs to the radical SAM superfamily. RlmN family. It depends on [4Fe-4S] cluster as a cofactor.

The protein localises to the cytoplasm. The enzyme catalyses adenosine(2503) in 23S rRNA + 2 reduced [2Fe-2S]-[ferredoxin] + 2 S-adenosyl-L-methionine = 2-methyladenosine(2503) in 23S rRNA + 5'-deoxyadenosine + L-methionine + 2 oxidized [2Fe-2S]-[ferredoxin] + S-adenosyl-L-homocysteine. It catalyses the reaction adenosine(37) in tRNA + 2 reduced [2Fe-2S]-[ferredoxin] + 2 S-adenosyl-L-methionine = 2-methyladenosine(37) in tRNA + 5'-deoxyadenosine + L-methionine + 2 oxidized [2Fe-2S]-[ferredoxin] + S-adenosyl-L-homocysteine. In terms of biological role, specifically methylates position 2 of adenine 2503 in 23S rRNA and position 2 of adenine 37 in tRNAs. m2A2503 modification seems to play a crucial role in the proofreading step occurring at the peptidyl transferase center and thus would serve to optimize ribosomal fidelity. This chain is Dual-specificity RNA methyltransferase RlmN, found in Agrobacterium fabrum (strain C58 / ATCC 33970) (Agrobacterium tumefaciens (strain C58)).